A 66-amino-acid chain; its full sequence is Large ribosomal subunit protein bL35 (66 aa).

This sequence belongs to the bacterial ribosomal protein bL35 family.

This is Large ribosomal subunit protein bL35 from Synechococcus sp. (strain ATCC 27144 / PCC 6301 / SAUG 1402/1) (Anacystis nidulans).